We begin with the raw amino-acid sequence, 418 residues long: 3-isopropylmalate dehydratase large subunit (418 aa).

Residues Cys297, Cys357, and Cys360 each contribute to the [4Fe-4S] cluster site.

This sequence belongs to the aconitase/IPM isomerase family. LeuC type 2 subfamily. In terms of assembly, heterodimer of LeuC and LeuD. The cofactor is [4Fe-4S] cluster.

The enzyme catalyses (2R,3S)-3-isopropylmalate = (2S)-2-isopropylmalate. Its pathway is amino-acid biosynthesis; L-leucine biosynthesis; L-leucine from 3-methyl-2-oxobutanoate: step 2/4. In terms of biological role, catalyzes the isomerization between 2-isopropylmalate and 3-isopropylmalate, via the formation of 2-isopropylmaleate. The sequence is that of 3-isopropylmalate dehydratase large subunit from Elusimicrobium minutum (strain Pei191).